The primary structure comprises 156 residues: uncharacterized protein (156 aa).

A run of 2 helical transmembrane segments spans residues 46–66 (GLVLWVMAGLGFALGDFAGVV) and 114–134 (IIDILLAWTSFLLIISGIVAL).

The protein localises to the cell membrane. This is an uncharacterized protein from Haemophilus influenzae (strain ATCC 51907 / DSM 11121 / KW20 / Rd).